The chain runs to 48 residues: MPQLVPFFFVNQVVYAFVILTVLIYAFTKFILPKFVRIFISRIYINKL.

The helical transmembrane segment at 4–24 (LVPFFFVNQVVYAFVILTVLI) threads the bilayer.

This sequence belongs to the ATPase protein 8 family. F-type ATPases have 2 components, CF(1) - the catalytic core - and CF(0) - the membrane proton channel.

The protein localises to the mitochondrion membrane. In terms of biological role, mitochondrial membrane ATP synthase (F(1)F(0) ATP synthase or Complex V) produces ATP from ADP in the presence of a proton gradient across the membrane which is generated by electron transport complexes of the respiratory chain. F-type ATPases consist of two structural domains, F(1) - containing the extramembraneous catalytic core and F(0) - containing the membrane proton channel, linked together by a central stalk and a peripheral stalk. During catalysis, ATP synthesis in the catalytic domain of F(1) is coupled via a rotary mechanism of the central stalk subunits to proton translocation. Part of the complex F(0) domain. Minor subunit located with subunit a in the membrane. The sequence is that of ATP synthase protein 8 (atp8) from Aspergillus amstelodami.